A 124-amino-acid polypeptide reads, in one-letter code: PEP-dependent dihydroxyacetone kinase 1, phosphoryl donor subunit DhaM (124 aa).

The region spanning 4-124 (PYGVVIISHS…AANLKTIEIK (121 aa)) is the PTS EIIA type-4 domain. Residue His12 is the Tele-phosphohistidine intermediate of the active site.

It belongs to the PEP-utilizing enzyme family. In terms of assembly, homodimer. The dihydroxyacetone kinase complex is composed of a homodimer of DhaM, a homodimer of DhaK and the subunit DhaL.

The protein localises to the cytoplasm. The catalysed reaction is dihydroxyacetone + phosphoenolpyruvate = dihydroxyacetone phosphate + pyruvate. Its function is as follows. Component of the dihydroxyacetone kinase complex, which is responsible for the phosphoenolpyruvate (PEP)-dependent phosphorylation of dihydroxyacetone. DhaM serves as the phosphoryl donor. Is phosphorylated by phosphoenolpyruvate in an EI- and HPr-dependent reaction, and a phosphorelay system on histidine residues finally leads to phosphoryl transfer to DhaL and dihydroxyacetone. This is PEP-dependent dihydroxyacetone kinase 1, phosphoryl donor subunit DhaM from Listeria innocua serovar 6a (strain ATCC BAA-680 / CLIP 11262).